A 328-amino-acid polypeptide reads, in one-letter code: Lateral signaling target 1 protein (328 aa).

Disordered stretches follow at residues 56–78, 108–135, and 177–200; these read SSQD…GLRS, PTHY…SASS, and PVQP…RLNG. Residues 178 to 200 are compositionally biased toward polar residues; the sequence is VQPSTSTSRNNVSQISGSSRLNG.

As to quaternary structure, interacts with fbf-2; the interaction probably mediates the release of the C-terminal tail of fbf-2 from the RNA-binding domain, thereby altering its RNA-binding affinity.

In terms of biological role, plays a role in germline stem cell maintenance, perhaps acting in concert with mRNA-binding factor fbf-2. May regulate fbf-2 by modulating RNA-binding and perhaps by competition with the intramolecular interaction between the fbf-2 RNA-binding domain and C-terminal tail. The protein is Lateral signaling target 1 protein of Caenorhabditis elegans.